The following is a 203-amino-acid chain: Protein GrpE 2 (203 aa).

The segment covering 1-12 (MPTRPQEPDRAA) has biased composition (basic and acidic residues). Positions 1–64 (MPTRPQEPDR…APAEDEYTTA (64 aa)) are disordered. Residues 45–56 (GEPGPDAAGPAP) show a composition bias toward low complexity.

The protein belongs to the GrpE family. Homodimer.

The protein resides in the cytoplasm. Participates actively in the response to hyperosmotic and heat shock by preventing the aggregation of stress-denatured proteins, in association with DnaK and GrpE. It is the nucleotide exchange factor for DnaK and may function as a thermosensor. Unfolded proteins bind initially to DnaJ; upon interaction with the DnaJ-bound protein, DnaK hydrolyzes its bound ATP, resulting in the formation of a stable complex. GrpE releases ADP from DnaK; ATP binding to DnaK triggers the release of the substrate protein, thus completing the reaction cycle. Several rounds of ATP-dependent interactions between DnaJ, DnaK and GrpE are required for fully efficient folding. This is Protein GrpE 2 from Streptomyces avermitilis (strain ATCC 31267 / DSM 46492 / JCM 5070 / NBRC 14893 / NCIMB 12804 / NRRL 8165 / MA-4680).